The sequence spans 310 residues: Pantothenate kinase (310 aa).

95–102 (GSVAVGKS) lines the ATP pocket.

The protein belongs to the prokaryotic pantothenate kinase family.

Its subcellular location is the cytoplasm. The enzyme catalyses (R)-pantothenate + ATP = (R)-4'-phosphopantothenate + ADP + H(+). The protein operates within cofactor biosynthesis; coenzyme A biosynthesis; CoA from (R)-pantothenate: step 1/5. The polypeptide is Pantothenate kinase (Rhodococcus opacus (strain B4)).